The primary structure comprises 369 residues: Chaperone protein DnaJ (369 aa).

A J domain is found at 4–69 (SYYEILEVEK…KKRALYDRYG (66 aa)). The CR-type zinc-finger motif lies at 130 to 207 (GCKKTIKVQY…CKGKTYILKD (78 aa)). 8 residues coordinate Zn(2+): cysteine 143, cysteine 146, cysteine 159, cysteine 162, cysteine 181, cysteine 184, cysteine 195, and cysteine 198. 4 CXXCXGXG motif repeats span residues 143-150 (CESCDGTG), 159-166 (CKQCNGQG), 181-188 (CGACQGKG), and 195-202 (CQACKGKT).

It belongs to the DnaJ family. Homodimer. Requires Zn(2+) as cofactor.

Its subcellular location is the cytoplasm. Its function is as follows. Participates actively in the response to hyperosmotic and heat shock by preventing the aggregation of stress-denatured proteins and by disaggregating proteins, also in an autonomous, DnaK-independent fashion. Unfolded proteins bind initially to DnaJ; upon interaction with the DnaJ-bound protein, DnaK hydrolyzes its bound ATP, resulting in the formation of a stable complex. GrpE releases ADP from DnaK; ATP binding to DnaK triggers the release of the substrate protein, thus completing the reaction cycle. Several rounds of ATP-dependent interactions between DnaJ, DnaK and GrpE are required for fully efficient folding. Also involved, together with DnaK and GrpE, in the DNA replication of plasmids through activation of initiation proteins. This is Chaperone protein DnaJ from Helicobacter pylori (strain ATCC 700392 / 26695) (Campylobacter pylori).